A 578-amino-acid polypeptide reads, in one-letter code: Putative diflavin flavoprotein A 2 (578 aa).

Residues 48 to 240 (RHGTTYNSFL…LQVVLVATGH (193 aa)) are zinc metallo-hydrolase. Residues H97, E99, D101, H164, D183, and H240 each coordinate Fe cation. Residues 269 to 406 (VALFYVDGYG…LCREAGTDLG (138 aa)) enclose the Flavodoxin-like domain. Positions 429–578 (IGRLSTGLYI…THHRKLGNHY (150 aa)) are flavodoxin-reductase-like.

It in the N-terminal section; belongs to the zinc metallo-hydrolase group 3 family. This sequence in the C-terminal section; belongs to the flavodoxin reductase family. Fe cation is required as a cofactor.

In terms of biological role, mediates electron transfer from NADH to oxygen, reducing it to water. This modular protein has 3 redox cofactors, in other organisms the same activity requires 2 or 3 proteins. This Synechocystis sp. (strain ATCC 27184 / PCC 6803 / Kazusa) protein is Putative diflavin flavoprotein A 2 (dfa2).